A 514-amino-acid polypeptide reads, in one-letter code: MRGKFLSLLLLITLACIGVSAKKHSTRPRLRRNDFPQDFVFGSATSAYQCEGAAHEDGRGPSIWDSFSEKFPEKIMDGSNGSIADDSYNLYKEDVNLLHQIGFDAYRFSISWSRILPRGTLKGGINQAGIEYYNNLINQLISKGVKPFVTLFHWDLPDALENAYGGLLGDEFVNDFRDYAELCFQKFGDRVKQWTTLNEPYTMVHEGYITGQKAPGRCSNFYKPDCLGGDAATEPYIVGHNLLLAHGVAVKVYREKYQATQKGEIGIALNTAWHYPYSDSYADRLAATRATAFTFDYFMEPIVYGRYPIEMVSHVKDGRLPTFTPEESEMLKGSYDFIGVNYYSSLYAKDVPCATENITMTTDSCVSLVGERNGVPIGPAAGSDWLLIYPKGIRDLLLHAKFRYNDPVLYITENGVDEANIGKIFLNDDLRIDYYAHHLKMVSDAISIGVNVKGYFAWSLMDNFEWSEGYTVRFGLVFVDFEDGRKRYLKKSAKWFRRLLKGAHGGTNEQVAVI.

The N-terminal stretch at 1 to 21 (MRGKFLSLLLLITLACIGVSA) is a signal peptide. Gln49 is a binding site for a beta-D-glucoside. Asn80 carries an N-linked (GlcNAc...) asparagine glycan. Residues His153 and 198–199 (NE) each bind a beta-D-glucoside. Glu199 functions as the Proton donor in the catalytic mechanism. Cys218 and Cys226 are oxidised to a cystine. Tyr343 is a binding site for a beta-D-glucoside. An N-linked (GlcNAc...) asparagine glycan is attached at Asn357. Residues Glu413, Trp458, 465-466 (EW), and Phe474 each bind a beta-D-glucoside. The Nucleophile role is filled by Glu413.

The protein belongs to the glycosyl hydrolase 1 family. As to expression, expressed at low levels in cauline leaves and flowers.

The enzyme catalyses Hydrolysis of terminal, non-reducing beta-D-glucosyl residues with release of beta-D-glucose.. The polypeptide is Beta-glucosidase 16 (Arabidopsis thaliana (Mouse-ear cress)).